The sequence spans 429 residues: Adenosylhomocysteinase (429 aa).

3 residues coordinate substrate: threonine 64, aspartate 136, and glutamate 161. NAD(+) is bound at residue 162-164 (TTT). Residues lysine 191 and aspartate 195 each contribute to the substrate site. NAD(+) contacts are provided by residues asparagine 196, 225–230 (GYGWCG), glutamate 248, asparagine 283, 304–306 (SGH), and asparagine 351.

It belongs to the adenosylhomocysteinase family. It depends on NAD(+) as a cofactor.

It localises to the cytoplasm. The enzyme catalyses S-adenosyl-L-homocysteine + H2O = L-homocysteine + adenosine. It participates in amino-acid biosynthesis; L-homocysteine biosynthesis; L-homocysteine from S-adenosyl-L-homocysteine: step 1/1. In terms of biological role, may play a key role in the regulation of the intracellular concentration of adenosylhomocysteine. This Gloeothece citriformis (strain PCC 7424) (Cyanothece sp. (strain PCC 7424)) protein is Adenosylhomocysteinase.